Consider the following 254-residue polypeptide: 14-3-3-like protein GF14 epsilon (254 aa).

S65 and S188 each carry phosphoserine.

It belongs to the 14-3-3 family. In terms of assembly, interacts with DREB1A and DREB1B in the nucleus. Interacts with CINV1.

The protein resides in the nucleus. The protein localises to the cytoplasm. In terms of biological role, is associated with a DNA binding complex that binds to the G box, a well-characterized cis-acting DNA regulatory element found in plant genes. The protein is 14-3-3-like protein GF14 epsilon (GRF10) of Arabidopsis thaliana (Mouse-ear cress).